The primary structure comprises 283 residues: MRSPAKTMPSMSPSSVSTEKSPPPSDTSMAIVAFDNSTTHFSSSPSPPHSLDHSSESEKEDAKSKPESRRNKNPGKVEETPSPIVVVHNHNRSVKEVVPTRKSARVGSGRSSGQRSGAVSAILRRSRREEVVKFSALGFRLSEVVLALISFSIMAADKTKGWSGDSFDRYKEYRFCLSVNVVAFVYSSFQACDLAYHLVKEKHLISHHLRPLFEFIIDQVLAYLLMSASTAAVTRVDDWVSNWGKDEFTEMASASIAMSFLAFLAFAFSSLISGYNLFNQGSL.

A disordered region spans residues 1-86 (MRSPAKTMPS…VEETPSPIVV (86 aa)). Topologically, residues 1 to 135 (MRSPAKTMPS…SRREEVVKFS (135 aa)) are cytoplasmic. The span at 9–20 (PSMSPSSVSTEK) shows a compositional bias: low complexity. A compositionally biased stretch (basic and acidic residues) spans 50 to 79 (SLDHSSESEKEDAKSKPESRRNKNPGKVEE). A helical membrane pass occupies residues 136–156 (ALGFRLSEVVLALISFSIMAA). Topologically, residues 157–174 (DKTKGWSGDSFDRYKEYR) are extracellular. A helical membrane pass occupies residues 175 to 195 (FCLSVNVVAFVYSSFQACDLA). Over 196–212 (YHLVKEKHLISHHLRPL) the chain is Cytoplasmic. The helical transmembrane segment at 213 to 233 (FEFIIDQVLAYLLMSASTAAV) threads the bilayer. At 234-251 (TRVDDWVSNWGKDEFTEM) the chain is on the extracellular side. Residues 252–272 (ASASIAMSFLAFLAFAFSSLI) form a helical membrane-spanning segment. At 273–283 (SGYNLFNQGSL) the chain is on the cytoplasmic side.

Belongs to the Casparian strip membrane proteins (CASP) family. As to quaternary structure, homodimer and heterodimers.

It is found in the cell membrane. The polypeptide is CASP-like protein 4A3 (Arabidopsis thaliana (Mouse-ear cress)).